The primary structure comprises 427 residues: Serine hydroxymethyltransferase (427 aa).

122–124 (GHI) provides a ligand contact to (6S)-5,6,7,8-tetrahydrofolate. Lys228 is modified (N6-(pyridoxal phosphate)lysine).

This sequence belongs to the SHMT family. As to quaternary structure, homodimer. Pyridoxal 5'-phosphate serves as cofactor.

It localises to the cytoplasm. It participates in amino-acid biosynthesis; glycine biosynthesis; glycine from L-serine: step 1/1. Functionally, catalyzes the reversible interconversion of serine and glycine with a modified folate serving as the one-carbon carrier. Also exhibits a pteridine-independent aldolase activity toward beta-hydroxyamino acids, producing glycine and aldehydes, via a retro-aldol mechanism. The sequence is that of Serine hydroxymethyltransferase from Thermococcus onnurineus (strain NA1).